A 357-amino-acid polypeptide reads, in one-letter code: sn-glycerol-3-phosphate import ATP-binding protein UgpC (357 aa).

One can recognise an ABC transporter domain in the interval 4–235; sequence LKLQAVTKSY…PASLFVASFI (232 aa). 37–44 lines the ATP pocket; that stretch reads GPSGCGKS.

It belongs to the ABC transporter superfamily. sn-glycerol-3-phosphate importer (TC 3.A.1.1.3) family. The complex is composed of two ATP-binding proteins (UgpC), two transmembrane proteins (UgpA and UgpE) and a solute-binding protein (UgpB).

It localises to the cell inner membrane. It catalyses the reaction sn-glycerol 3-phosphate(out) + ATP + H2O = sn-glycerol 3-phosphate(in) + ADP + phosphate + H(+). Part of the ABC transporter complex UgpBAEC involved in sn-glycerol-3-phosphate (G3P) import. Responsible for energy coupling to the transport system. The polypeptide is sn-glycerol-3-phosphate import ATP-binding protein UgpC (Yersinia pseudotuberculosis serotype I (strain IP32953)).